The sequence spans 460 residues: ATP synthase subunit beta (460 aa).

ATP is bound at residue 150 to 157 (GGAGVGKT).

It belongs to the ATPase alpha/beta chains family. F-type ATPases have 2 components, CF(1) - the catalytic core - and CF(0) - the membrane proton channel. CF(1) has five subunits: alpha(3), beta(3), gamma(1), delta(1), epsilon(1). CF(0) has three main subunits: a(1), b(2) and c(9-12). The alpha and beta chains form an alternating ring which encloses part of the gamma chain. CF(1) is attached to CF(0) by a central stalk formed by the gamma and epsilon chains, while a peripheral stalk is formed by the delta and b chains.

The protein resides in the cell inner membrane. It carries out the reaction ATP + H2O + 4 H(+)(in) = ADP + phosphate + 5 H(+)(out). Produces ATP from ADP in the presence of a proton gradient across the membrane. The catalytic sites are hosted primarily by the beta subunits. The chain is ATP synthase subunit beta from Edwardsiella ictaluri (strain 93-146).